A 192-amino-acid chain; its full sequence is Interferon epsilon (192 aa).

The N-terminal stretch at 1–21 (MVHRQLPETVLLLLVSSTIFS) is a signal peptide. A disulfide bond links Cys52 and Cys162.

Belongs to the alpha/beta interferon family. Expressed at very high levels in uterus and, at much lower levels, in ovary and cervix. Very low levels, if any, in other organs. In the endometrium, expressed in the luminal and glandular epithelial cells (at protein level).

Its subcellular location is the secreted. In terms of biological role, type I interferon required for maintaining basal levels of IFN-regulated genes, including 2'-5'-oligoadenylate synthetase, IRF7 and ISG15, in the female reproductive tract. Directly mediates protection against viral, including HSV-2, and bacterial, including Chlamydia muridarum, genital infections. The sequence is that of Interferon epsilon (Ifne) from Mus musculus (Mouse).